The sequence spans 488 residues: Probable glycine dehydrogenase (decarboxylating) subunit 2 (488 aa).

Position 274 is an N6-(pyridoxal phosphate)lysine (Lys274).

Belongs to the GcvP family. C-terminal subunit subfamily. In terms of assembly, the glycine cleavage system is composed of four proteins: P, T, L and H. In this organism, the P 'protein' is a heterodimer of two subunits. Pyridoxal 5'-phosphate serves as cofactor.

It catalyses the reaction N(6)-[(R)-lipoyl]-L-lysyl-[glycine-cleavage complex H protein] + glycine + H(+) = N(6)-[(R)-S(8)-aminomethyldihydrolipoyl]-L-lysyl-[glycine-cleavage complex H protein] + CO2. In terms of biological role, the glycine cleavage system catalyzes the degradation of glycine. The P protein binds the alpha-amino group of glycine through its pyridoxal phosphate cofactor; CO(2) is released and the remaining methylamine moiety is then transferred to the lipoamide cofactor of the H protein. This is Probable glycine dehydrogenase (decarboxylating) subunit 2 from Listeria monocytogenes serotype 4a (strain HCC23).